The primary structure comprises 64 residues: Sec-independent protein translocase protein TatA (64 aa).

Residues 10–30 (LVLILGIALIIFGPGKLPELG) form a helical membrane-spanning segment.

It belongs to the TatA/E family. In terms of assembly, forms a complex with TatC.

It localises to the cell membrane. Part of the twin-arginine translocation (Tat) system that transports large folded proteins containing a characteristic twin-arginine motif in their signal peptide across membranes. TatA could form the protein-conducting channel of the Tat system. This Alkaliphilus oremlandii (strain OhILAs) (Clostridium oremlandii (strain OhILAs)) protein is Sec-independent protein translocase protein TatA.